A 514-amino-acid chain; its full sequence is Vacuolar aminopeptidase 1 (514 aa).

Positions 1–45 (MEEQREILEQLKKTLQMLTVEPSKNNQIANEEKEKKENENSWCIL) are cleaved as a propeptide — required for vacuolar localization. Mediates aggregation and vesicle formation in Cvt pathway. Asn-107 and Asn-110 each carry an N-linked (GlcNAc...) asparagine glycan. His-132 serves as a coordination point for Zn(2+). Residue His-210 participates in substrate binding. Positions 303, 339, and 340 each coordinate Zn(2+). Glu-339 serves as a coordination point for substrate. A Phosphoserine modification is found at Ser-356. Asp-385 provides a ligand contact to Zn(2+). The substrate site is built by Asp-385 and His-388. Residue Asn-448 is glycosylated (N-linked (GlcNAc...) asparagine). His-479 contacts Zn(2+).

Belongs to the peptidase M18 family. In terms of assembly, homododecamer. The precursor form of aminopeptidase 1 (prApe1) assembles into dodecamers and further aggregates into higher multimers (the Ape1 complex) in the cytoplasm. The Ape1 complex is disaggregated in the vacuolar lumen, but mature aminopeptidase 1 (mApe1) retains its dodecameric form. Dodecamer assembly in the cytoplasm is essential for formation of an enzymatically active complex. If cytoplasmic homododecamerization of prApe1 is disturbed in mutants, homododecamers of mApe1 will form in the vacuole, but they are enzymatically inactive. Interacts with ATG19. Zn(2+) is required as a cofactor. In terms of processing, synthesized in a precursor form (prApe1) that has an amino-terminal propeptide. The N-terminal extension of the 61 kDa precursor is proteolytically processed in two sequential steps. The first step involves proteinase A (PrA/PEP4) and produces a 55 kDa unstable intermediate (iAPI). The second step involves proteinase B (PrB/PRB1) and converts iAPI into the 50 kDa stable, mature enzyme (mApe1).

The protein resides in the vacuole. The enzyme catalyses Release of an N-terminal amino acid, preferably a neutral or hydrophobic one, from a polypeptide. Aminoacyl-arylamides are poor substrates.. With respect to regulation, strongly and specifically activated by Cl(-) and Br(-), which act as positive allosteric effectors. Inactivated by metal-chelating agents. In terms of biological role, resident vacuolar enzyme that catalyzes the removal of amino acids from the N-terminus of peptides and proteins. Also acts as the major cargo protein of the cytoplasm-to-vacuole targeting (Cvt) pathway. The precursor form of aminopeptidase 1 (prApe1) assembles into dodecamers and the propeptide mediates the aggregation of dodecamers into higher multimers. The multimers are then recognized via the propeptide by their receptor ATG19, and ATG19 further interacts with ATG11, which tethers the APE1-ATG19 complex to the pre-autophagosomal structure (PAS). The cargo-receptor complex (also Cvt complex) is selectively enwrapped by a double-membrane structure termed the Cvt vesicle under vegetative growth conditions and by a similar but larger double-membrane structure termed the autophagosome under nitrogen starvation conditions. The Cvt vesicle or the autophagosome fuses with the vacuolar membrane and release its content in the vacuolar lumen. In the vacuole, prApe1 is processed into mature aminopeptidase 1 (mApe1). The chain is Vacuolar aminopeptidase 1 from Saccharomyces cerevisiae (strain ATCC 204508 / S288c) (Baker's yeast).